The primary structure comprises 274 residues: MSDDEIVCILDTRNNQKEKDRQITREVNNLIIEQENTQNRVIAPSPQLMVAIRQSVEQRQEYIRRMSIDIQRMLIPYGEDVYLISDMMLLKEEVVQHIDFQFLKNKVVPPPPVFYSSTIYFLYKQATCQRMGPIYLQQLGNVVTLRIKENYPAIKTISDYPSLKSIIEFYSRFEMGNGPDFFVKKEESQRQFEVVLGEAFQYINLFHKKHGTPPAPPQFLIKFCILMHQLGFQEWTAESFDVIVVDRLRRNLRNIDQRFFDSIRDAFGIYLKRF.

This is an uncharacterized protein from Caenorhabditis elegans.